A 552-amino-acid polypeptide reads, in one-letter code: 5'-AMP-activated protein kinase catalytic subunit alpha-2 (552 aa).

The Protein kinase domain occupies 16-268; sequence YVLGDTLGVG…IKDIREHEWF (253 aa). Residues 22–30 and lysine 45 contribute to the ATP site; that span reads LGVGTFGKV. The active-site Proton acceptor is the aspartate 139. Phosphothreonine; by LKB1 and CaMKK2 is present on threonine 172. Threonine 258 carries the post-translational modification Phosphothreonine. The segment at 291-376 is AIS; it reads EAVKEVCEKF…PERMPPLIAD (86 aa). The residue at position 377 (serine 377) is a Phosphoserine. The disordered stretch occupies residues 478–519; the sequence is EQRSGSSTPQRSCSAAGLHRPRSSLDSVTAESHSLSGSLSGS. Residues 480 to 490 show a composition bias toward polar residues; it reads RSGSSTPQRSC. Serine 491 is modified (phosphoserine). The span at 509–519 shows a compositional bias: low complexity; sequence SHSLSGSLSGS.

This sequence belongs to the protein kinase superfamily. CAMK Ser/Thr protein kinase family. SNF1 subfamily. AMPK is a heterotrimer of an alpha catalytic subunit (PRKAA1 or PRKAA2), a beta (PRKAB1 or PRKAB2) and a gamma non-catalytic subunits (PRKAG1, PRKAG2 or PRKAG3). Interacts with FNIP1 and FNIP2. Interacts with DUSP29. Interacts with ARF6. The phosphorylated form at Thr-172 mediated by CamKK2 interacts with ACSS2. Mg(2+) is required as a cofactor. Ubiquitinated. In terms of processing, phosphorylated at Thr-172 by STK11/LKB1 in complex with STE20-related adapter-alpha (STRADA) pseudo kinase and CAB39. Also phosphorylated at Thr-172 by CAMKK2; triggered by a rise in intracellular calcium ions, without detectable changes in the AMP/ATP ratio. CAMKK1 can also phosphorylate Thr-172, but at much lower level. Dephosphorylated by protein phosphatase 2A and 2C (PP2A and PP2C). Phosphorylated by ULK1; leading to negatively regulate AMPK activity and suggesting the existence of a regulatory feedback loop between ULK1 and AMPK. Dephosphorylated by PPM1A and PPM1B at Thr-172 (mediated by STK11/LKB1).

It is found in the cytoplasm. It localises to the nucleus. It catalyses the reaction L-seryl-[protein] + ATP = O-phospho-L-seryl-[protein] + ADP + H(+). It carries out the reaction L-threonyl-[protein] + ATP = O-phospho-L-threonyl-[protein] + ADP + H(+). The enzyme catalyses L-seryl-[acetyl-CoA carboxylase] + ATP = O-phospho-L-seryl-[acetyl-CoA carboxylase] + ADP + H(+). The catalysed reaction is L-seryl-[3-hydroxy-3-methylglutaryl-coenzyme A reductase] + ATP = O-phospho-L-seryl-[3-hydroxy-3-methylglutaryl-coenzyme A reductase] + ADP + H(+). Activated by phosphorylation on Thr-172. Binding of AMP to non-catalytic gamma subunit (PRKAG1, PRKAG2 or PRKAG3) results in allosteric activation, inducing phosphorylation on Thr-172. AMP-binding to gamma subunit also sustains activity by preventing dephosphorylation of Thr-172. ADP also stimulates Thr-172 phosphorylation, without stimulating already phosphorylated AMPK. ATP promotes dephosphorylation of Thr-172, rendering the enzyme inactive. Under physiological conditions AMPK mainly exists in its inactive form in complex with ATP, which is much more abundant than AMP. Selectively inhibited by compound C (6-[4-(2-Piperidin-1-yl-ethoxy)-phenyl)]-3-pyridin-4-yl-pyyrazolo[1,5-a] pyrimidine. Activated by resveratrol, a natural polyphenol present in red wine, and S17834, a synthetic polyphenol. Salicylate/aspirin directly activates kinase activity, primarily by inhibiting Thr-172 dephosphorylation. Its function is as follows. Catalytic subunit of AMP-activated protein kinase (AMPK), an energy sensor protein kinase that plays a key role in regulating cellular energy metabolism. In response to reduction of intracellular ATP levels, AMPK activates energy-producing pathways and inhibits energy-consuming processes: inhibits protein, carbohydrate and lipid biosynthesis, as well as cell growth and proliferation. AMPK acts via direct phosphorylation of metabolic enzymes, and by longer-term effects via phosphorylation of transcription regulators. Regulates lipid synthesis by phosphorylating and inactivating lipid metabolic enzymes such as ACACA, ACACB, GYS1, HMGCR and LIPE; regulates fatty acid and cholesterol synthesis by phosphorylating acetyl-CoA carboxylase (ACACA and ACACB) and hormone-sensitive lipase (LIPE) enzymes, respectively. Promotes lipolysis of lipid droplets by mediating phosphorylation of isoform 1 of CHKA (CHKalpha2). Regulates insulin-signaling and glycolysis by phosphorylating IRS1, PFKFB2 and PFKFB3. Involved in insulin receptor/INSR internalization. AMPK stimulates glucose uptake in muscle by increasing the translocation of the glucose transporter SLC2A4/GLUT4 to the plasma membrane, possibly by mediating phosphorylation of TBC1D4/AS160. Regulates transcription and chromatin structure by phosphorylating transcription regulators involved in energy metabolism such as CRTC2/TORC2, FOXO3, histone H2B, HDAC5, MEF2C, MLXIPL/ChREBP, EP300, HNF4A, p53/TP53, SREBF1, SREBF2 and PPARGC1A. Acts as a key regulator of glucose homeostasis in liver by phosphorylating CRTC2/TORC2, leading to CRTC2/TORC2 sequestration in the cytoplasm. In response to stress, phosphorylates 'Ser-36' of histone H2B (H2BS36ph), leading to promote transcription. Acts as a key regulator of cell growth and proliferation by phosphorylating FNIP1, TSC2, RPTOR, WDR24 and ATG1/ULK1: in response to nutrient limitation, negatively regulates the mTORC1 complex by phosphorylating RPTOR component of the mTORC1 complex and by phosphorylating and activating TSC2. Also phosphorylates and inhibits GATOR2 subunit WDR24 in response to nutrient limitation, leading to suppress glucose-mediated mTORC1 activation. In response to energetic stress, phosphorylates FNIP1, inactivating the non-canonical mTORC1 signaling, thereby promoting nuclear translocation of TFEB and TFE3, and inducing transcription of lysosomal or autophagy genes. In response to nutrient limitation, promotes autophagy by phosphorylating and activating ATG1/ULK1. In that process also activates WDR45/WIPI4. Phosphorylates CASP6, thereby preventing its autoprocessing and subsequent activation. AMPK also acts as a regulator of circadian rhythm by mediating phosphorylation of CRY1, leading to destabilize it. May regulate the Wnt signaling pathway by phosphorylating CTNNB1, leading to stabilize it. Also acts as a regulator of cellular polarity by remodeling the actin cytoskeleton; probably by indirectly activating myosin. Also phosphorylates CFTR, EEF2K, KLC1, NOS3 and SLC12A1. Plays an important role in the differential regulation of pro-autophagy (composed of PIK3C3, BECN1, PIK3R4 and UVRAG or ATG14) and non-autophagy (composed of PIK3C3, BECN1 and PIK3R4) complexes, in response to glucose starvation. Can inhibit the non-autophagy complex by phosphorylating PIK3C3 and can activate the pro-autophagy complex by phosphorylating BECN1. Upon glucose starvation, promotes ARF6 activation in a kinase-independent manner leading to cell migration. Upon glucose deprivation mediates the phosphorylation of ACSS2 at 'Ser-659', which exposes the nuclear localization signal of ACSS2, required for its interaction with KPNA1 and nuclear translocation. Upon stress, regulates mitochondrial fragmentation through phosphorylation of MTFR1L. This is 5'-AMP-activated protein kinase catalytic subunit alpha-2 (PRKAA2) from Sus scrofa (Pig).